The following is a 401-amino-acid chain: Glucose-6-phosphate isomerase (401 aa).

The Proton donor role is filled by Glu-261. Active-site residues include His-282 and Lys-392.

The protein belongs to the GPI family. Homodimer.

Its subcellular location is the cytoplasm. The enzyme catalyses alpha-D-glucose 6-phosphate = beta-D-fructose 6-phosphate. It functions in the pathway carbohydrate biosynthesis; gluconeogenesis. The protein operates within carbohydrate degradation; glycolysis; D-glyceraldehyde 3-phosphate and glycerone phosphate from D-glucose: step 2/4. Its activity is regulated as follows. Competively inhibited by 6-phosphogluconate and erythrose 4-phosphate. Catalyzes the isomerization of glucose-6-P to fructose-6-P. This is Glucose-6-phosphate isomerase from Methanocaldococcus jannaschii (strain ATCC 43067 / DSM 2661 / JAL-1 / JCM 10045 / NBRC 100440) (Methanococcus jannaschii).